We begin with the raw amino-acid sequence, 146 residues long: PTS system fructose-specific EIIA component (146 aa).

Positions methionine 1–phenylalanine 124 constitute a PTS EIIA type-4 domain. The Tele-phosphohistidine intermediate role is filled by histidine 9. Histidine 9 bears the Phosphohistidine; by HPr mark.

Its subcellular location is the cytoplasm. The phosphoenolpyruvate-dependent sugar phosphotransferase system (sugar PTS), a major carbohydrate active transport system, catalyzes the phosphorylation of incoming sugar substrates concomitantly with their translocation across the cell membrane. The enzyme II LevDE PTS system is involved in fructose transport. In terms of biological role, levD and LevE act as negative regulators of the levanase operon. They may be involved in a PTS-mediated phosphorylation of a regulator. In Bacillus subtilis (strain 168), this protein is PTS system fructose-specific EIIA component.